We begin with the raw amino-acid sequence, 113 residues long: Endoribonuclease SymE (113 aa).

The SpoVT-AbrB domain maps to 29 to 74; the sequence is SRYPDYSRIPAITLKGQWLEAAGFATGTAVDVKVMEGCIVLTAQPP.

Belongs to the SymE family.

The protein localises to the cytoplasm. In terms of biological role, involved in the degradation and recycling of damaged RNA. It is itself a target for degradation by the ATP-dependent protease Lon. This chain is Endoribonuclease SymE, found in Escherichia coli O6:K15:H31 (strain 536 / UPEC).